A 117-amino-acid polypeptide reads, in one-letter code: MDKKAARLRRATRARKKMQELGATRLVVHRTPRHIYAQVIAANGSEVLASASTVEKAISEALKYSGNADAATAVGKAIAERAIAKGVQNVSFDRSGFKYHGRVAALATAARDAGLQF.

Belongs to the universal ribosomal protein uL18 family. Part of the 50S ribosomal subunit; part of the 5S rRNA/L5/L18/L25 subcomplex. Contacts the 5S and 23S rRNAs.

In terms of biological role, this is one of the proteins that bind and probably mediate the attachment of the 5S RNA into the large ribosomal subunit, where it forms part of the central protuberance. In Aeromonas salmonicida (strain A449), this protein is Large ribosomal subunit protein uL18.